The sequence spans 58 residues: Small ribosomal subunit protein bS21 (58 aa).

Residues 37–58 (FYDKPSVKKRAKSKAAAKYRGR) form a disordered region. Residues 43-58 (VKKRAKSKAAAKYRGR) show a composition bias toward basic residues.

Belongs to the bacterial ribosomal protein bS21 family.

The protein is Small ribosomal subunit protein bS21 (rpsU) of Chlamydia muridarum (strain MoPn / Nigg).